The chain runs to 422 residues: Aliphatic (R)-hydroxynitrile lyase (422 aa).

Residues Cys63, His85, Cys115, Cys118, Cys121, Cys129, and Cys199 each coordinate Zn(2+).

The protein belongs to the zinc-containing alcohol dehydrogenase family. Homodimer. It depends on Zn(2+) as a cofactor.

It catalyses the reaction (2R)-2-hydroxy-2-methylbutanenitrile = butan-2-one + hydrogen cyanide. Functionally, involved in the catabolism of cyanogenic glycosides. Naturally occurring substrates are the aliphatic acetone cyanohydrin and butan-2-one cyanohydrin, which are the aglycones of the cyanogenic glycosides linamarin, lotaustralin, linustatin and neolinustatin. Can use various aliphatic ketones and aldehydes as substrates, but not aromatic ketones. The polypeptide is Aliphatic (R)-hydroxynitrile lyase (Linum usitatissimum (Flax)).